Consider the following 2242-residue polypeptide: DEP domain-containing protein DDB_G0279099 (2242 aa).

Disordered stretches follow at residues 388-465, 576-644, 701-730, 871-965, 1077-1194, 1287-1336, 1384-1414, 1446-1471, and 1502-1521; these read SQNT…SNNS, DSNA…YSRV, PILR…FDQK, DPTT…TKKS, QLQL…AFNS, GSQQ…MNGS, SELL…ALPE, AQSS…NTSG, and SNNN…NSLN. A coiled-coil region spans residues 392–440; it reads IQNNNNNNNNNNNNNNNNNNNNNNNNNNNNNNNNNNNNNSNNNKNNQNN. Positions 581 to 614 are enriched in low complexity; the sequence is GGNNNNNYNNNNGNGNGHNHNNHNNNNNNNNNND. A compositionally biased stretch (acidic residues) spans 622–631; it reads EPSDFSDTED. 2 stretches are compositionally biased toward polar residues: residues 632-642 and 719-729; these read NSSTTPNSQYS and HPISPSNSFDQ. Low complexity predominate over residues 872-955; that stretch reads PTTTTTTGGT…PNSSNTVPNS (84 aa). Residues 1066–1101 are a coiled coil; sequence IPTVENNQHQQQLQLEQQEKEKEKARLAALEKKKPF. Over residues 1082-1106 the composition is skewed to basic and acidic residues; sequence QQEKEKEKARLAALEKKKPFPREDS. Low complexity-rich tracts occupy residues 1108–1182 and 1287–1299; these read STLI…ATTA and GSQQ…GSQS. The segment covering 1300–1311 has biased composition (polar residues); that stretch reads APTSPLTPHKNI. 3 stretches are compositionally biased toward low complexity: residues 1312–1336, 1384–1410, and 1446–1470; these read NTNN…MNGS, SELL…GENN, and AQSS…TNTS. Residues 1556-1629 enclose the DEP domain; that stretch reads IGIKMTERKY…DGQFYYRLKE (74 aa). Positions 1645–1668 are enriched in low complexity; the sequence is TNNNFNNNNTNSNNNQQQQQQQQS. Disordered stretches follow at residues 1645–1763, 1803–1910, 2122–2145, and 2165–2218; these read TNNN…SMSN, DEAN…QQQQ, NYNN…NLLK, and NSDT…KNEM. A compositionally biased stretch (polar residues) spans 1669–1702; sequence IPSVTSSAVNSPNKDSNTPDHSPISSPKQIGNKL. Composition is skewed to low complexity over residues 1703–1760 and 1807–1848; these read SSSS…IQSS and GDNN…SSNS. Residues 1791–1821 are a coiled coil; the sequence is LTNKEKDKEKEIDEANGDNNNNNNNNNNNNN. Polar residues-rich tracts occupy residues 1849–1871 and 1879–1889; these read GQGS…TNPL and YGSSVQNSNQH. 2 stretches are compositionally biased toward low complexity: residues 1890–1910 and 2122–2133; these read QQQQ…QQQQ and NYNNNNNNNNNN. Composition is skewed to basic and acidic residues over residues 2166-2181 and 2192-2218; these read SDTE…DNNH and DTDH…KNEM.

The protein in the N-terminal section; belongs to the IML1 family.

This chain is DEP domain-containing protein DDB_G0279099, found in Dictyostelium discoideum (Social amoeba).